A 752-amino-acid polypeptide reads, in one-letter code: Photosystem I P700 chlorophyll a apoprotein A1 (752 aa).

A run of 8 helical transmembrane segments spans residues 73-96, 159-182, 198-222, 294-312, 349-372, 388-414, 436-458, and 533-551; these read IFSA…FHGA, LYVT…FHYH, MNHH…HVSL, RAHH…GHMY, WHAQ…HHMY, LCLF…IFMV, AIIS…LYIH, and FLVH…LILL. The [4Fe-4S] cluster site is built by Cys575 and Cys584. 2 helical membrane passes run 591–612 and 666–688; these read HVFL…HFSW and LSAY…MFLF. Chlorophyll a' is bound at residue His677. Met685 and Tyr693 together coordinate chlorophyll a. Trp694 contacts phylloquinone. Residues 726–746 traverse the membrane as a helical segment; sequence AVGVAHYLLGGIATTWSFFHA.

Belongs to the PsaA/PsaB family. As to quaternary structure, the PsaA/B heterodimer binds the P700 chlorophyll special pair and subsequent electron acceptors. PSI consists of a core antenna complex that captures photons, and an electron transfer chain that converts photonic excitation into a charge separation. The eukaryotic PSI reaction center is composed of at least 11 subunits. The cofactor is P700 is a chlorophyll a/chlorophyll a' dimer, A0 is one or more chlorophyll a, A1 is one or both phylloquinones and FX is a shared 4Fe-4S iron-sulfur center..

The protein localises to the plastid. Its subcellular location is the cyanelle thylakoid membrane. It catalyses the reaction reduced [plastocyanin] + hnu + oxidized [2Fe-2S]-[ferredoxin] = oxidized [plastocyanin] + reduced [2Fe-2S]-[ferredoxin]. Its function is as follows. PsaA and PsaB bind P700, the primary electron donor of photosystem I (PSI), as well as the electron acceptors A0, A1 and FX. PSI is a cytochrome c6-ferredoxin oxidoreductase, converting photonic excitation into a charge separation, which transfers an electron from the donor P700 chlorophyll pair to the spectroscopically characterized acceptors A0, A1, FX, FA and FB in turn. Oxidized P700 is reduced on the lumenal side of the thylakoid membrane by cytochrome c6. This is Photosystem I P700 chlorophyll a apoprotein A1 from Cyanophora paradoxa.